Consider the following 248-residue polypeptide: Spherulin-1B (248 aa).

The N-terminal stretch at 1–20 (MQVRNILVALVVVCFAVSEA) is a signal peptide. One can recognise a Cupin type-1 domain in the interval 61–207 (FDFKNSKLGV…SLNISSIQTV (147 aa)). Mn(2+)-binding residues include His-110, His-112, Glu-117, and His-157. Asn-200 is a glycosylation site (N-linked (GlcNAc...) asparagine).

This sequence belongs to the germin family.

Its subcellular location is the secreted. The protein resides in the cell wall. The polypeptide is Spherulin-1B (Physarum polycephalum (Slime mold)).